The chain runs to 262 residues: Adenosylcobinamide-GDP ribazoletransferase (262 aa).

Transmembrane regions (helical) follow at residues 41–63 (AFPF…LMAL), 68–85 (LFAA…TGAL), 115–134 (IGTY…VSAF), 141–163 (FSPL…AMVW), and 201–221 (LLFY…VAFL).

It belongs to the CobS family. As to quaternary structure, associated with a large complex of proteins. Requires Mg(2+) as cofactor.

It localises to the cell inner membrane. It carries out the reaction alpha-ribazole + adenosylcob(III)inamide-GDP = adenosylcob(III)alamin + GMP + H(+). The catalysed reaction is alpha-ribazole 5'-phosphate + adenosylcob(III)inamide-GDP = adenosylcob(III)alamin 5'-phosphate + GMP + H(+). Its pathway is cofactor biosynthesis; adenosylcobalamin biosynthesis; adenosylcobalamin from cob(II)yrinate a,c-diamide: step 7/7. Its function is as follows. Joins adenosylcobinamide-GDP and alpha-ribazole to generate adenosylcobalamin (Ado-cobalamin). Also synthesizes adenosylcobalamin 5'-phosphate from adenosylcobinamide-GDP and alpha-ribazole 5'-phosphate. This is Adenosylcobinamide-GDP ribazoletransferase (cobV) from Sinorhizobium sp.